A 455-amino-acid chain; its full sequence is Dihydrolipoyllysine-residue succinyltransferase component of 2-oxoglutarate dehydrogenase complex, mitochondrial (455 aa).

A mitochondrion-targeting transit peptide spans 1–68; sequence MLSRSRCASR…RFFRTTAVCK (68 aa). A Lipoyl-binding domain is found at 71 to 145; that stretch reads VITVKTPAFA…EGGTPLFTLR (75 aa). The residue at position 82 (S82) is a Phosphoserine. An N6-lipoyllysine modification is found at K111. K155 is modified (N6-acetyllysine). Residues 155–173 are compositionally biased toward low complexity; that stretch reads KPAAAPAAAAPKAEPTVSA. The tract at residues 155 to 220 is disordered; that stretch reads KPAAAPAAAA…PRAEAGAGVG (66 aa). Positions 174–193 are enriched in pro residues; that stretch reads VPPPPAAPIPTQMPPVPSPS. N6-acetyllysine is present on residues K269, K274, K275, K279, and K309. Residues H426 and D430 contribute to the active site.

Belongs to the 2-oxoacid dehydrogenase family. In terms of assembly, the 2-oxoglutarate dehydrogenase complex is composed of OGDH (2-oxoglutarate dehydrogenase; E1), DLST (dihydrolipoamide succinyltransferase; E2), DLD (dihydrolipoamide dehydrogenase; E3) and the assembly factor KGD4. It contains multiple copies of the three enzymatic components (E1, E2 and E3). In the nucleus, the 2-oxoglutarate dehydrogenase complex associates with KAT2A. Interacts with ABHD11; this interaction maintains the functional lipoylation of the 2-oxoglutarate dehydrogenase complex. (R)-lipoate serves as cofactor.

The protein localises to the mitochondrion matrix. It is found in the nucleus. It carries out the reaction N(6)-[(R)-dihydrolipoyl]-L-lysyl-[protein] + succinyl-CoA = N(6)-[(R)-S(8)-succinyldihydrolipoyl]-L-lysyl-[protein] + CoA. It functions in the pathway amino-acid degradation; L-lysine degradation via saccharopine pathway; glutaryl-CoA from L-lysine: step 6/6. Its pathway is carbohydrate metabolism; tricarboxylic acid cycle. In terms of biological role, dihydrolipoamide succinyltransferase (E2) component of the 2-oxoglutarate dehydrogenase complex. The 2-oxoglutarate dehydrogenase complex catalyzes the overall conversion of 2-oxoglutarate to succinyl-CoA and CO(2). The 2-oxoglutarate dehydrogenase complex is mainly active in the mitochondrion. A fraction of the 2-oxoglutarate dehydrogenase complex also localizes in the nucleus and is required for lysine succinylation of histones: associates with KAT2A on chromatin and provides succinyl-CoA to histone succinyltransferase KAT2A. This is Dihydrolipoyllysine-residue succinyltransferase component of 2-oxoglutarate dehydrogenase complex, mitochondrial from Bos taurus (Bovine).